The following is a 151-amino-acid chain: Nucleoside diphosphate kinase (151 aa).

Residues K11, F59, R87, T93, R104, and N114 each contribute to the ATP site. Residue H117 is the Pros-phosphohistidine intermediate of the active site.

It belongs to the NDK family. Homotetramer. Mg(2+) serves as cofactor.

The protein resides in the cytoplasm. It catalyses the reaction a 2'-deoxyribonucleoside 5'-diphosphate + ATP = a 2'-deoxyribonucleoside 5'-triphosphate + ADP. The catalysed reaction is a ribonucleoside 5'-diphosphate + ATP = a ribonucleoside 5'-triphosphate + ADP. Major role in the synthesis of nucleoside triphosphates other than ATP. The ATP gamma phosphate is transferred to the NDP beta phosphate via a ping-pong mechanism, using a phosphorylated active-site intermediate. The sequence is that of Nucleoside diphosphate kinase from Prochlorococcus marinus (strain MIT 9211).